The chain runs to 454 residues: Serine/arginine (SR)-type shuttling mRNA binding protein HRB1 (454 aa).

The segment at 1–141 is disordered; the sequence is MSDQERGSEN…SSGARGDYGP (141 aa). The segment covering 14-24 has biased composition (basic residues); the sequence is SRSRSRSPVRR. 2 stretches are compositionally biased toward basic and acidic residues: residues 25–38 and 50–113; these read RMSDDHGYERDNHL and KFAD…DYPR. An Omega-N-methylarginine modification is found at R127. 2 consecutive RRM domains span residues 161 to 237 and 261 to 338; these read NSIF…QDNP and HEVI…SKES. A phosphoserine mark is found at S338, S343, and S355. The 78-residue stretch at 376-453 folds into the RRM 3 domain; that stretch reads RLIYCSNLPF…CDLDISYAKR (78 aa).

In terms of processing, methylated by HMT1.

Its subcellular location is the cytoplasm. The protein localises to the nucleus. It is found in the P-body. The protein resides in the stress granule. In terms of biological role, binds to intron-containing transcripts and is involved in quality control for the export of spliced mRNAs from the nucleus. Binds to pre-mRNAs until splicing is completed or until faulty mRNAs are degraded. On correctly spliced mRNAs, GBP2 and HRB1 recruit MEX67 to allow nuclear export. On faulty mRNAs, GBP2 and HRB1 associate with the TRAMP complex that guides those pre-mRNAs to the exosome for degradation. This Saccharomyces cerevisiae (strain ATCC 204508 / S288c) (Baker's yeast) protein is Serine/arginine (SR)-type shuttling mRNA binding protein HRB1.